Reading from the N-terminus, the 359-residue chain is Ornithine cyclodeaminase (359 aa).

Positions 53 and 77 each coordinate L-ornithine. NAD(+)-binding positions include Thr-92, Arg-120, 147 to 148, Asp-169, Thr-209, 232 to 235, Lys-239, and Ser-300; these read AQ and VGGD. Arg-120 is an L-ornithine binding site. Asp-235 contributes to the L-ornithine binding site. The active-site Proton donor/acceptor is Asp-235. Position 301 (Val-301) interacts with L-ornithine.

This sequence belongs to the ornithine cyclodeaminase/mu-crystallin family. It depends on NAD(+) as a cofactor.

It carries out the reaction L-ornithine = L-proline + NH4(+). It participates in amino-acid biosynthesis; L-proline biosynthesis; L-proline from L-ornithine: step 1/1. In terms of biological role, catalyzes the conversion of L-ornithine into L-proline with release of ammonia. The protein is Ornithine cyclodeaminase of Brucella abortus biovar 1 (strain 9-941).